The chain runs to 496 residues: Fibronectin type III and SPRY domain-containing protein 1 (496 aa).

Residues 4 to 99 (QREALRKIIK…ALESSEELLE (96 aa)) are a coiled coil. The COS domain occupies 105–162 (LQAMDSEDFPQAAKQIKDGVTMAPAFRLSLKAKVSDNMSHLMVDFAQERQMLQALKFL). The Fibronectin type-III domain occupies 164–268 (VPSAPVIDLA…EPVTLETPAF (105 aa)). The 210-residue stretch at 268–477 (FMFRLDASTS…VTTGLQVPSA (210 aa)) folds into the B30.2/SPRY domain. The interval 301–336 (KAREKDGKGRTASPINSPARGTPSPKRMPSGRGGRD) is disordered. Omega-N-methylarginine is present on residues R310 and R320.

In terms of assembly, oligomerization is required for binding to microtubules. As to expression, highly expressed in brain tissues, including cerebellum, cerebral cortex, medulla, occipital pole, frontal lobe, temporal lobe and putamen. Lower expression in spinal cord.

It is found in the cytoplasm. The protein localises to the cytoskeleton. The protein resides in the microtubule organizing center. It localises to the centrosome. Its subcellular location is the nucleus. It is found in the cleavage furrow. In terms of biological role, may be involved in microtubule organization and stabilization. This is Fibronectin type III and SPRY domain-containing protein 1 (FSD1) from Homo sapiens (Human).